A 191-amino-acid polypeptide reads, in one-letter code: UPF0312 protein Pmen_0419 (191 aa).

An N-terminal signal peptide occupies residues 1–22; that stretch reads MLKNALAALVLGSALIGGQAMA.

Belongs to the UPF0312 family. Type 1 subfamily.

The protein resides in the periplasm. The polypeptide is UPF0312 protein Pmen_0419 (Ectopseudomonas mendocina (strain ymp) (Pseudomonas mendocina)).